The chain runs to 554 residues: Phosphomannomutase (554 aa).

The active-site Phosphoserine intermediate is the serine 149. Positions 149, 301, 303, and 305 each coordinate Mg(2+).

Belongs to the phosphohexose mutase family. The cofactor is Mg(2+).

The catalysed reaction is alpha-D-mannose 1-phosphate = D-mannose 6-phosphate. The protein is Phosphomannomutase (manB) of Mycoplasma pneumoniae (strain ATCC 29342 / M129 / Subtype 1) (Mycoplasmoides pneumoniae).